The following is an 89-amino-acid chain: Dynein light chain 1, cytoplasmic (89 aa).

This sequence belongs to the dynein light chain family. In terms of assembly, interacts with spn-F. Forms ternary complexes with spn-F and IKKepsilon. Ubiquitous.

It is found in the cytoplasm. The protein resides in the cytoskeleton. Its function is as follows. Acts as a non-catalytic accessory component of a dynein complex. The sequence is that of Dynein light chain 1, cytoplasmic (ctp) from Drosophila melanogaster (Fruit fly).